Reading from the N-terminus, the 87-residue chain is U3-theraphotoxin-Hhn1a 6 (87 aa).

A signal peptide spans 1–24; the sequence is MVNMKASMFLTFAGLVLLFVVCYA. A propeptide spanning residues 25 to 52 is cleaved from the precursor; the sequence is SESEKKEFPKEMLSSIFAVDNDFKQEER. 3 disulfide bridges follow: cysteine 54-cysteine 67, cysteine 61-cysteine 72, and cysteine 66-cysteine 79.

The protein belongs to the neurotoxin 10 (Hwtx-1) family. 51 (Hntx-8) subfamily. Hntx-8 sub-subfamily. As to expression, expressed by the venom gland.

Its subcellular location is the secreted. Ion channel inhibitor. The polypeptide is U3-theraphotoxin-Hhn1a 6 (Cyriopagopus hainanus (Chinese bird spider)).